The primary structure comprises 379 residues: Cobalt-precorrin-5B C(1)-methyltransferase (379 aa).

This sequence belongs to the CbiD family.

It catalyses the reaction Co-precorrin-5B + S-adenosyl-L-methionine = Co-precorrin-6A + S-adenosyl-L-homocysteine. It participates in cofactor biosynthesis; adenosylcobalamin biosynthesis; cob(II)yrinate a,c-diamide from sirohydrochlorin (anaerobic route): step 6/10. Catalyzes the methylation of C-1 in cobalt-precorrin-5B to form cobalt-precorrin-6A. This chain is Cobalt-precorrin-5B C(1)-methyltransferase, found in Salmonella choleraesuis (strain SC-B67).